A 391-amino-acid chain; its full sequence is MGYPEVERREPLPAAAPRERGSQGCGCRGAPARAGEGNSCRLFLGFFGLSLALHLLTLCCYLELRSELRRERGTESRLGGPGAPGTSGTLSSPGSLDPVGPITRHLGQPSFQQQPLEPGEDPLPPDSQDRHQMALLNFFFPDEKAYSEEESRRVRRNKRSKSGEGADGPVKNKKKGKKAGPPGPNGPPGPPGPPGPQGPPGIPGIPGIPGTTVMGPPGPPGPPGPQGPPGLQGPSGAADKTGTRENQPAVVHLQGQGSAIQVKNDLSGGVLNDWSRITMNPKVFKLHPRSGELEVLVDGTYFIYSQVEVYYINFTDFASYEVVVDEKPFLQCTRSIETGKTNYNTCYTAGVCLLKARQKIAVKMVHADISINMSKHTTFFGAIRLGEAPAS.

Residues 1–21 (MGYPEVERREPLPAAAPRERG) show a composition bias toward basic and acidic residues. A disordered region spans residues 1–28 (MGYPEVERREPLPAAAPRERGSQGCGCR). Over 1-41 (MGYPEVERREPLPAAAPRERGSQGCGCRGAPARAGEGNSCR) the chain is Cytoplasmic. Residues 42-62 (LFLGFFGLSLALHLLTLCCYL) traverse the membrane as a helical; Signal-anchor for type II membrane protein segment. The Extracellular portion of the chain corresponds to 63 to 391 (ELRSELRRER…AIRLGEAPAS (329 aa)). Disordered regions lie at residues 72 to 129 (RGTE…DSQD) and 146 to 244 (YSEE…TGTR). Low complexity predominate over residues 86–96 (TSGTLSSPGSL). Residues 180-229 (GPPGPNGPPGPPGPPGPQGPPGIPGIPGIPGTTVMGPPGPPGPPGPQGPP) form the Collagen-like domain. Composition is skewed to pro residues over residues 181–203 (PPGP…PGIP) and 216–228 (PPGP…PQGP). Positions 249-385 (AVVHLQGQGS…HTTFFGAIRL (137 aa)) constitute a THD domain. N313 carries N-linked (GlcNAc...) asparagine glycosylation. C332 and C346 are oxidised to a cystine. The N-linked (GlcNAc...) asparagine glycan is linked to N372.

This sequence belongs to the tumor necrosis factor family. Homotrimer. The homotrimers may then dimerize and form higher-order oligomers. Post-translationally, N-glycosylated. In terms of processing, processing by furin produces a secreted form.

The protein localises to the cell membrane. It is found in the secreted. Cytokine which is involved in epithelial-mesenchymal signaling during morphogenesis of ectodermal organs. Functions as a ligand activating the DEATH-domain containing receptors EDAR and EDA2R. Isoform TAA binds only to the receptor EDAR, while isoform TA-A2 binds exclusively to the receptor EDA2R. May also play a role in cell adhesion. Its function is as follows. Isoform TAA binds only to the receptor EDAR, while isoform TA-A2 binds exclusively to the receptor EDA2R. Functionally, isoform TA-A2 binds exclusively to the receptor EDA2R. This chain is Ectodysplasin-A (Eda), found in Mus musculus (Mouse).